The primary structure comprises 104 residues: uncharacterized protein (104 aa).

A helical transmembrane segment spans residues 80-98 (GSSLPLFDLVFILLSTFFL).

The protein localises to the membrane. This is an uncharacterized protein from Saccharomyces cerevisiae (strain ATCC 204508 / S288c) (Baker's yeast).